Here is a 608-residue protein sequence, read N- to C-terminus: Kinetochore protein NUF2 (608 aa).

The segment at 121 to 125 is required for nuclear localization and function; the sequence is IGNLR. Coiled-coil stretches lie at residues 176–319 and 358–460; these read FESQ…QQKL and REKL…IEEE.

This sequence belongs to the NUF2 family.

The protein resides in the chromosome. Its subcellular location is the centromere. The protein localises to the kinetochore. Functionally, required for anchoring centrosomal cores to the nuclear periphery. Plays a role in chromosome segregation but is dispensable for centromere clustering. The polypeptide is Kinetochore protein NUF2 (Toxoplasma gondii (strain ATCC 50611 / Me49)).